Here is a 393-residue protein sequence, read N- to C-terminus: Biotin synthase, mitochondrial (393 aa).

A mitochondrion-targeting transit peptide spans 1–20; sequence MSVSFTRSFPRAFIRSYGTV. Residues 81–310 form the Radical SAM core domain; that stretch reads SAIQMCTLMN…ATIVRLAAGR (230 aa). Residues cysteine 96, cysteine 100, and cysteine 103 each contribute to the [4Fe-4S] cluster site. 4 residues coordinate [2Fe-2S] cluster: cysteine 140, cysteine 173, cysteine 233, and arginine 305. Residues 366–393 form a disordered region; the sequence is NAATPQQHVDSVAHESEKNPAAPAAEAL.

This sequence belongs to the radical SAM superfamily. Biotin synthase family. It depends on [4Fe-4S] cluster as a cofactor. The cofactor is [2Fe-2S] cluster.

Its subcellular location is the mitochondrion. It catalyses the reaction (4R,5S)-dethiobiotin + (sulfur carrier)-SH + 2 reduced [2Fe-2S]-[ferredoxin] + 2 S-adenosyl-L-methionine = (sulfur carrier)-H + biotin + 2 5'-deoxyadenosine + 2 L-methionine + 2 oxidized [2Fe-2S]-[ferredoxin]. It functions in the pathway cofactor biosynthesis; biotin biosynthesis; biotin from 7,8-diaminononanoate: step 2/2. Biotin synthase; part of the cluster involved in the biosynthesis of biotin (also known as vitamin B8 or vitamin H), a water-soluble vitamin that functions as a prosthetic group of many carboxylases, such as acetyl-CoA carboxylase and pyruvate carboxylase. Catalyzes the conversion of dethiobiotin (DTB) to biotin by the insertion of a sulfur atom into dethiobiotin via a radical-based mechanism. The protein is Biotin synthase, mitochondrial of Emericella nidulans (strain FGSC A4 / ATCC 38163 / CBS 112.46 / NRRL 194 / M139) (Aspergillus nidulans).